A 342-amino-acid chain; its full sequence is Signaling lymphocytic activation molecule (342 aa).

An N-terminal signal peptide occupies residues 1–26 (MDSRGFLSLRCLLVLALASKLSCGTG). Over 27 to 237 (ESLMNCPEVP…CRPESSVPRQ (211 aa)) the chain is Extracellular. The 110-residue stretch at 29–138 (LMNCPEVPGK…QHFCLQLKLY (110 aa)) folds into the Ig-like V-type domain. N-linked (GlcNAc...) asparagine glycosylation is found at asparagine 57, asparagine 102, asparagine 125, asparagine 150, asparagine 157, asparagine 189, and asparagine 217. The Ig-like C2-type domain occupies 144–223 (PEIKVLNWTQ…PVSNRSWSFN (80 aa)). 2 disulfide bridges follow: cysteine 158-cysteine 228 and cysteine 164-cysteine 209. The chain crosses the membrane as a helical span at residues 238–261 (WRLYAGLFLGGIVGVILIFEVVLL). Over 262-342 (LLRRRGKTNH…VYASVTFPES (81 aa)) the chain is Cytoplasmic. Positions 282–287 (TIYAQV) match the ITSM 1 motif. Tyrosine 284, tyrosine 310, and tyrosine 334 each carry phosphotyrosine; by FYN. An SH2-binding motif is present at residues 310 to 315 (YVAATE). Residues 332–337 (TVYASV) carry the ITSM 2 motif.

Interacts (via cytoplasmic domain) with SH2D1A and SH2D1B; SH2D1A mediates association with FYN. Interacts (via cytoplasmic domain phosphorylated on tyrosine residues) with INPP5D and PTPN11; presence of SH2D1A facilitates binding to INPP5D. Interacts with MAP4K1. Interacts with PIK3C3, BECN1 and UVRAG; indicative for an association with PI3K complex II (PI3KC3-C2). Interacts with canine distemper virus HN protein; suggesting that it may serve as a receptor. In terms of processing, phosphorylated on tyrosine residues by FYN.

The protein resides in the cell membrane. Functionally, self-ligand receptor of the signaling lymphocytic activation molecule (SLAM) family. SLAM receptors triggered by homo- or heterotypic cell-cell interactions are modulating the activation and differentiation of a wide variety of immune cells and thus are involved in the regulation and interconnection of both innate and adaptive immune response. Activities are controlled by presence or absence of small cytoplasmic adapter proteins, SH2D1A/SAP and/or SH2D1B/EAT-2. SLAMF1-induced signal-transduction events in T-lymphocytes are different from those in B-cells. Two modes of SLAMF1 signaling seem to exist: one depending on SH2D1A (and perhaps SH2D1B) and another in which protein-tyrosine phosphatase 2C (PTPN11)-dependent signal transduction operates. Initially it has been proposed that association with SH2D1A prevents binding to inhibitory effectors including INPP5D/SHIP1 and PTPN11/SHP-2. However, signaling is also regulated by SH2D1A which can simultaneously interact with and recruit FYN which subsequently phosphorylates and activates SLAMF1. Mediates IL-2-independent proliferation of activated T cells during immune responses and induces IFN-gamma production. Downstreaming signaling involves INPP5D/SHIP1, DOK1 and DOK2 leading to inhibited IFN-gamma production in T-cells, and PRKCQ, BCL10 and NFKB1 leading to increased T-cell activation and Th2 cytokine production. Promotes T-cell receptor-induced IL-4 secretion by CD4(+) cells. Inhibits antigen receptor-mediated production of IFN-gamma, but not IL-2, in CD4(-)/CD8(-) T-cells. Required for IL-4 production by germinal centers T follicular helper (T(Fh))cells. May inhibit CD40-induced signal transduction in monocyte-derived dendritic cells. May play a role in allergic responses and may regulate allergen-induced Th2 cytokine and Th1 cytokine secretion. In conjunction with SLAMF6 controls the transition between positive selection and the subsequent expansion and differentiation of the thymocytic natural killer T (NKT) cell lineage. Involved in the peripheral differentiation of indifferent natural killer T (iNKT) cells toward a regulatory NKT2 type. In macrophages involved in down-regulation of IL-12, TNF-alpha and nitric oxide in response to lipopolysaccharide (LPS). In B-cells activates the ERK signaling pathway independently of SH2D1A but implicating both, SYK and INPP5D, and activates Akt signaling dependent on SYK and SH2D1A. In conjunction with SLAMF5 and SLAMF6 may be a negative regulator of the humoral immune response. The protein is Signaling lymphocytic activation molecule (SLAMF1) of Canis lupus familiaris (Dog).